The chain runs to 563 residues: Phospholipase B-like protein F (563 aa).

The signal sequence occupies residues 1–21 (MKIINSFVFIFVLLFVFNTNA). 7 N-linked (GlcNAc...) asparagine glycosylation sites follow: N85, N107, N118, N121, N208, N312, and N537.

The protein belongs to the phospholipase B-like family.

It is found in the secreted. Functionally, probable phospholipase. This chain is Phospholipase B-like protein F (plbF), found in Dictyostelium discoideum (Social amoeba).